Consider the following 1069-residue polypeptide: Carbamoyl phosphate synthase large chain (1069 aa).

The interval 1 to 401 (MPLNKDIKRV…AFLKGIRSLE (401 aa)) is carboxyphosphate synthetic domain. Residues Arg129, Arg169, Gly175, Gly176, Lys208, Val210, Glu215, Gly241, Ile242, His243, Gln284, and Glu298 each contribute to the ATP site. One can recognise an ATP-grasp 1 domain in the interval 133–327 (RDMMNRIGEP…IAKLAAKIAL (195 aa)). Mg(2+) contacts are provided by Gln284, Glu298, and Asn300. Mn(2+)-binding residues include Gln284, Glu298, and Asn300. Positions 402-549 (IGKYSLDHKK…YSTYEQYDEV (148 aa)) are oligomerization domain. The interval 550–932 (EVSNRRKVIV…ALYKGFVGAN (383 aa)) is carbamoyl phosphate synthetic domain. Residues 674–864 (DELLERLDIS…IVDIATQVML (191 aa)) enclose the ATP-grasp 2 domain. ATP is bound by residues Arg710, Lys749, Leu751, Glu755, Gly780, Val781, His782, Ser783, Gln823, and Glu835. Positions 823, 835, and 837 each coordinate Mg(2+). Residues Gln823, Glu835, and Asn837 each contribute to the Mn(2+) site. The region spanning 932–1069 (NMYPSKEKGK…KDLEVFDITK (138 aa)) is the MGS-like domain. The tract at residues 933–1069 (MYPSKEKGKI…KDLEVFDITK (137 aa)) is allosteric domain.

Belongs to the CarB family. In terms of assembly, composed of two chains; the small (or glutamine) chain promotes the hydrolysis of glutamine to ammonia, which is used by the large (or ammonia) chain to synthesize carbamoyl phosphate. Tetramer of heterodimers (alpha,beta)4. The cofactor is Mg(2+). Mn(2+) serves as cofactor.

It catalyses the reaction hydrogencarbonate + L-glutamine + 2 ATP + H2O = carbamoyl phosphate + L-glutamate + 2 ADP + phosphate + 2 H(+). It carries out the reaction hydrogencarbonate + NH4(+) + 2 ATP = carbamoyl phosphate + 2 ADP + phosphate + 2 H(+). It functions in the pathway amino-acid biosynthesis; L-arginine biosynthesis; carbamoyl phosphate from bicarbonate: step 1/1. The protein operates within pyrimidine metabolism; UMP biosynthesis via de novo pathway; (S)-dihydroorotate from bicarbonate: step 1/3. Its function is as follows. Large subunit of the glutamine-dependent carbamoyl phosphate synthetase (CPSase). CPSase catalyzes the formation of carbamoyl phosphate from the ammonia moiety of glutamine, carbonate, and phosphate donated by ATP, constituting the first step of 2 biosynthetic pathways, one leading to arginine and/or urea and the other to pyrimidine nucleotides. The large subunit (synthetase) binds the substrates ammonia (free or transferred from glutamine from the small subunit), hydrogencarbonate and ATP and carries out an ATP-coupled ligase reaction, activating hydrogencarbonate by forming carboxy phosphate which reacts with ammonia to form carbamoyl phosphate. The polypeptide is Carbamoyl phosphate synthase large chain (Clostridium botulinum (strain Alaska E43 / Type E3)).